The primary structure comprises 578 residues: Ketol-acid reductoisomerase, chloroplastic (578 aa).

The N-terminal 52 residues, 1–52 (MAASTTLALSHPKTLAAAAAAAPKAPTAPAAVSFPVSHAACAPLAARRRAVT), are a transit peptide targeting the chloroplast. The KARI N-terminal Rossmann domain occupies 90-288 (VRGGRNLFPL…ALGSPFTFAT (199 aa)). NADP(+) is bound by residues 111–118 (GVIGWGSQ), 144–149 (RKGSKS), and 183–187 (SDAAQ). Residue His-208 is part of the active site. KARI C-terminal knotted domains lie at 289–437 (TLEQ…RPEN) and 438–574 (DLGP…RPEL). Mg(2+) contacts are provided by Asp-297, Glu-301, Glu-474, and Glu-478. Ser-500 serves as a coordination point for substrate.

It belongs to the ketol-acid reductoisomerase family. As to quaternary structure, homodimer. Requires Mg(2+) as cofactor.

The protein resides in the plastid. The protein localises to the chloroplast. The enzyme catalyses (2R)-2,3-dihydroxy-3-methylbutanoate + NADP(+) = (2S)-2-acetolactate + NADPH + H(+). The catalysed reaction is (2R,3R)-2,3-dihydroxy-3-methylpentanoate + NADP(+) = (S)-2-ethyl-2-hydroxy-3-oxobutanoate + NADPH + H(+). The protein operates within amino-acid biosynthesis; L-isoleucine biosynthesis; L-isoleucine from 2-oxobutanoate: step 2/4. It functions in the pathway amino-acid biosynthesis; L-valine biosynthesis; L-valine from pyruvate: step 2/4. The chain is Ketol-acid reductoisomerase, chloroplastic from Oryza sativa subsp. japonica (Rice).